The primary structure comprises 1852 residues: Dihydropyridine-sensitive L-type skeletal muscle calcium channel subunit alpha-1 (1852 aa).

Over 1–70 (MESGSGGGGG…KTCINIVEWK (70 aa)) the chain is Cytoplasmic. The stretch at 57-354 (NPFRKTCINI…LVLGALSGEF (298 aa)) is one I repeat. A helical membrane pass occupies residues 71–86 (PFEIIILLTIFANCVA). The Extracellular portion of the chain corresponds to 87–107 (LAVFLPMPEEDTNNTNLTLES). Residues N99 and N102 are each glycosylated (N-linked (GlcNAc...) asparagine). The helical transmembrane segment at 108-127 (LEYIFLVIFTLECFLKIVAY) threads the bilayer. Over 128–139 (GLLFHEGAYLRN) the chain is Cytoplasmic. The chain crosses the membrane as a helical span at residues 140–155 (CWNILDFVIVFMGLFT). The Extracellular segment spans residues 156 to 176 (LVVDTINTIAGVPTEKGGGFD). The chain crosses the membrane as a helical span at residues 177–195 (MKALRAFRVLRPLRLVSGV). At 196-214 (PSLQVVMSSILKSMLPLFH) the chain is on the cytoplasmic side. Residues 215–234 (IALLVFFMVHIYAIMGLELF) traverse the membrane as a helical segment. The Extracellular segment spans residues 235–326 (KCKMHKTCYY…WINDAMGNDW (92 aa)). Residue N274 is glycosylated (N-linked (GlcNAc...) asparagine). Residues 327–351 (PWIYFLTLILVGSFFILNLVLGALS) traverse the membrane as a helical segment. Residues 352–447 (GEFTKEREES…RKCHVWVKSK (96 aa)) are Cytoplasmic-facing. The segment at 374-391 (QQMDEDLEGYMEWITHAE) is binding to the beta subunit. One copy of the II repeat lies at 433-679 (NVVLRRKCHV…VFLAIAVDNL (247 aa)). Residues 448–466 (FFNWWVLLVVLLNTLVIAM) traverse the membrane as a helical segment. The Extracellular portion of the chain corresponds to 467 to 481 (EHHNQTEGLTSFQDT). A glycan (N-linked (GlcNAc...) asparagine) is linked at N470. A helical membrane pass occupies residues 482–501 (ANVILLACFTIEMVMKMYAF). Topologically, residues 502-509 (GPRAYFMS) are cytoplasmic. The helical transmembrane segment at 510–528 (IFNRFDCFVVTIGILEIIL) threads the bilayer. The Extracellular portion of the chain corresponds to 529 to 538 (VVSNIMTPLG). The helical transmembrane segment at 539–557 (ISVMRCIRLLRLFKLTRYW) threads the bilayer. The Cytoplasmic segment spans residues 558 to 576 (TSLNNLVASLLNSVKSIAS). Residues 577–596 (LLLLLFLFIVIFALLGMQVF) traverse the membrane as a helical segment. The Extracellular portion of the chain corresponds to 597–651 (GGKFNFPDRVIQRSNFDNFPQALISVFQVLTGEEWDSIMYNGIMAHGGPQSPGIL). A helical transmembrane segment spans residues 652 to 675 (VSIYFIILYVCGNFVLLNVFLAIA). Over 676–815 (VDNLAEAESL…KLCHRIVNHT (140 aa)) the chain is Cytoplasmic. One copy of the III repeat lies at 802 to 1084 (HKFRKLCHRI…IFVGFVIVTF (283 aa)). The helical transmembrane segment at 816 to 834 (TFTNIILLFILLSSISLAA) threads the bilayer. The Extracellular portion of the chain corresponds to 835 to 850 (EDPIDPRSFRNKVLAY). The chain crosses the membrane as a helical span at residues 851–870 (ADIVFTTVFTIEIVLKMTVY). Residues 871 to 882 (GAFLHTGSFCRN) lie on the Cytoplasmic side of the membrane. The chain crosses the membrane as a helical span at residues 883–901 (SFNILDLIVVGVSLLSMGM). Residues 902–908 (ESSTISV) lie on the Extracellular side of the membrane. Residues 909-927 (VKILRVLRVLRPLRAINRA) traverse the membrane as a helical segment. At 928 to 946 (KGLKHVVQCMFVAIKTIGN) the chain is on the cytoplasmic side. The chain crosses the membrane as a helical span at residues 947-966 (IVLVTMLLDFMFACIGVQLF). Topologically, residues 967–1056 (KGKLYYCTDP…TGPLYNNRVG (90 aa)) are extracellular. The tract at residues 1004–1093 (RMWVNSDFNF…FQKQGEQEYK (90 aa)) is dihydropyridine binding. The helical transmembrane segment at 1057 to 1081 (ISIFFIIYIIIIAFFMMNIFVGFVI) threads the bilayer. The Cytoplasmic segment spans residues 1082–1134 (VTFQKQGEQEYKDCELDKNQRQCVQYALKARPLKCYIPKNPHQYRVWYFVTSC). The stretch at 1121-1405 (NPHQYRVWYF…LFVAIIMDNV (285 aa)) is one IV repeat. Residues 1135 to 1153 (YFEYLMFFLIMLNTLCLGI) traverse the membrane as a helical segment. Residues 1154-1168 (QHCNQSDHITKLSDT) are Extracellular-facing. The N-linked (GlcNAc...) asparagine glycan is linked to N1157. The chain crosses the membrane as a helical span at residues 1169 to 1188 (LNLIFTVLFTGEMIVKLIAF). Residues 1189-1196 (KAKGYFGD) lie on the Cytoplasmic side of the membrane. The helical transmembrane segment at 1197–1215 (PWNVFDFIIVVGSIVDVVL) threads the bilayer. The Extracellular segment spans residues 1216–1252 (SEVDAALEARGGLWCLHGCAEVNPMQAIAEAENVRVS). The chain crosses the membrane as a helical span at residues 1253-1271 (ITFFRLFRVLRLIKLLNRS). Residues 1272-1290 (EGIRNLLWTFIKSFQALPH) lie on the Cytoplasmic side of the membrane. A helical membrane pass occupies residues 1291–1310 (VGLLIVMLFFIYAVIGMQMF). Over 1311–1377 (GKVALVDGTE…GEEYTCGSSI (67 aa)) the chain is Extracellular. The interval 1358–1424 (LCDAKSDYGP…LGPHHLDEFK (67 aa)) is dihydropyridine binding. The interval 1370–1413 (EYTCGSSIAVFYFLSFYILCAFLIINLFVAIIMDNVDYLTRDWS) is phenylalkylamine binding. A helical membrane pass occupies residues 1378 to 1402 (AVFYFLSFYILCAFLIINLFVAIIM). Topologically, residues 1403–1852 (DNVDYLTRDW…TKPKENTSAV (450 aa)) are cytoplasmic. Residues 1418-1453 (HHLDEFKKIWAEYDPEATGRIKHLDVVTLLRRIQPP) enclose the EF-hand domain. The Ca(2+) site is built by D1431, E1433, T1435, R1437, and D1442. Residues 1820–1852 (NRQSGKVTKRKRRPIPVPPGTKSTKPKENTSAV) form a disordered region.

The protein belongs to the calcium channel alpha-1 subunit (TC 1.A.1.11) family. In terms of assembly, multisubunit complex consisting of alpha-1, alpha-2, beta and delta subunits in a 1:1:1:1 ratio. The channel activity is directed by the pore-forming and voltage-sensitive alpha-1 subunit. In many cases, this subunit is sufficient to generate voltage-sensitive calcium channel activity. The auxiliary subunits beta and alpha-2/delta linked by a disulfide bridge regulate the channel activity. An additional gamma subunit is present only in skeletal muscle L-type channel. Post-translationally, may be non-phosphorylated. As to expression, skeletal muscle.

Its subcellular location is the membrane. Its function is as follows. Voltage-sensitive calcium channels (VSCC) mediate the entry of calcium ions into excitable cells and are also involved in a variety of calcium-dependent processes, including muscle contraction, gene expression, cell motility, cell division and cell death. The isoform alpha-1S gives rise to L-type calcium currents. Long-lasting (L-type) calcium channels belong to the 'high-voltage activated' (HVA) group. They are blocked by dihydropyridines (DHP), phenylalkylamines, and by benzothiazepines. Calcium channels containing the alpha-1S subunit play an important role in excitation-contraction coupling in skeletal muscle. This Cyprinus carpio (Common carp) protein is Dihydropyridine-sensitive L-type skeletal muscle calcium channel subunit alpha-1.